The primary structure comprises 230 residues: Large ribosomal subunit protein uL1 (230 aa).

Belongs to the universal ribosomal protein uL1 family. In terms of assembly, part of the 50S ribosomal subunit.

Binds directly to 23S rRNA. The L1 stalk is quite mobile in the ribosome, and is involved in E site tRNA release. Its function is as follows. Protein L1 is also a translational repressor protein, it controls the translation of the L11 operon by binding to its mRNA. The chain is Large ribosomal subunit protein uL1 from Ligilactobacillus salivarius (strain UCC118) (Lactobacillus salivarius).